The primary structure comprises 319 residues: CBBY-like protein (319 aa).

Residues 1–65 (MATVKISLSL…YRSSRSVGVT (65 aa)) constitute a chloroplast transit peptide. Aspartate 82 (nucleophile) is an active-site residue. Mg(2+)-binding residues include aspartate 82 and aspartate 84. Position 82 (aspartate 82) interacts with substrate. The Proton donor role is filled by aspartate 84. Substrate is bound by residues glutamate 91, 125–129 (GGKER), 158–161 (HKQK), and 198–204 (STSNEKA). Position 258 (aspartate 258) interacts with Mg(2+).

It belongs to the HAD-like hydrolase superfamily. DOG/GPP family. Requires Mg(2+) as cofactor.

Its subcellular location is the plastid. The protein resides in the chloroplast. It carries out the reaction D-xylulose 1,5-bisphosphate + H2O = D-xylulose 5-phosphate + phosphate. Functionally, highly selective xylulose-1,5-bisphosphate (XuBP) phosphatase. Also shows activity towards ribulose-1,5-bisphosphate (RuBP) and fructose-1,6-bisphosphate (FBP), but not towards fructose-6-phosphate (F6P) or ribulose-5-phosphate (Ru5P). Degrades xylulose-1,5-bisphosphate, a potent inhibitor of rubisco produced by the rubisco itself. This chain is CBBY-like protein, found in Arabidopsis thaliana (Mouse-ear cress).